We begin with the raw amino-acid sequence, 72 residues long: Translation initiation factor IF-1 (72 aa).

An S1-like domain is found at 1-72 (MAKEELLEFP…TKGRITYRFK (72 aa)).

The protein belongs to the IF-1 family. As to quaternary structure, component of the 30S ribosomal translation pre-initiation complex which assembles on the 30S ribosome in the order IF-2 and IF-3, IF-1 and N-formylmethionyl-tRNA(fMet); mRNA recruitment can occur at any time during PIC assembly.

The protein localises to the cytoplasm. Its function is as follows. One of the essential components for the initiation of protein synthesis. Stabilizes the binding of IF-2 and IF-3 on the 30S subunit to which N-formylmethionyl-tRNA(fMet) subsequently binds. Helps modulate mRNA selection, yielding the 30S pre-initiation complex (PIC). Upon addition of the 50S ribosomal subunit IF-1, IF-2 and IF-3 are released leaving the mature 70S translation initiation complex. This Caulobacter vibrioides (strain ATCC 19089 / CIP 103742 / CB 15) (Caulobacter crescentus) protein is Translation initiation factor IF-1.